A 255-amino-acid chain; its full sequence is Hydroxyacylglutathione hydrolase (255 aa).

Zn(2+)-binding residues include His56, His58, Asp60, His61, His114, Asp133, and His171.

It belongs to the metallo-beta-lactamase superfamily. Glyoxalase II family. As to quaternary structure, monomer. Zn(2+) is required as a cofactor.

The catalysed reaction is an S-(2-hydroxyacyl)glutathione + H2O = a 2-hydroxy carboxylate + glutathione + H(+). The protein operates within secondary metabolite metabolism; methylglyoxal degradation; (R)-lactate from methylglyoxal: step 2/2. In terms of biological role, thiolesterase that catalyzes the hydrolysis of S-D-lactoyl-glutathione to form glutathione and D-lactic acid. The sequence is that of Hydroxyacylglutathione hydrolase from Rhodopseudomonas palustris (strain BisB5).